The sequence spans 331 residues: Putative peptidyl-prolyl cis-trans isomerase RF_0616 (331 aa).

Residues 28 to 50 are disordered; it reads NPTTIEQTASNNSSTDENQTSIN. One can recognise a PPIase FKBP-type domain in the interval 128 to 226; sequence GHVVTVFYQI…NNEVKIYDDE (99 aa).

The enzyme catalyses [protein]-peptidylproline (omega=180) = [protein]-peptidylproline (omega=0). This chain is Putative peptidyl-prolyl cis-trans isomerase RF_0616, found in Rickettsia felis (strain ATCC VR-1525 / URRWXCal2) (Rickettsia azadi).